A 31-amino-acid chain; its full sequence is MFTLTSYFGFLLAALTITSALFIGLNKIRLI.

A helical transmembrane segment spans residues 4–26 (LTSYFGFLLAALTITSALFIGLN).

Belongs to the PetL family. The 4 large subunits of the cytochrome b6-f complex are cytochrome b6, subunit IV (17 kDa polypeptide, PetD), cytochrome f and the Rieske protein, while the 4 small subunits are PetG, PetL, PetM and PetN. The complex functions as a dimer.

It localises to the plastid. It is found in the chloroplast thylakoid membrane. Functionally, component of the cytochrome b6-f complex, which mediates electron transfer between photosystem II (PSII) and photosystem I (PSI), cyclic electron flow around PSI, and state transitions. PetL is important for photoautotrophic growth as well as for electron transfer efficiency and stability of the cytochrome b6-f complex. The polypeptide is Cytochrome b6-f complex subunit 6 (Blitum bonus-henricus (Good King Henry)).